A 253-amino-acid chain; its full sequence is tRNA (guanine-N(1)-)-methyltransferase (253 aa).

S-adenosyl-L-methionine is bound by residues Gly116 and 136-141 (VGDYIL).

This sequence belongs to the RNA methyltransferase TrmD family. In terms of assembly, homodimer.

Its subcellular location is the cytoplasm. It carries out the reaction guanosine(37) in tRNA + S-adenosyl-L-methionine = N(1)-methylguanosine(37) in tRNA + S-adenosyl-L-homocysteine + H(+). Its function is as follows. Specifically methylates guanosine-37 in various tRNAs. The chain is tRNA (guanine-N(1)-)-methyltransferase from Colwellia psychrerythraea (strain 34H / ATCC BAA-681) (Vibrio psychroerythus).